Here is an 817-residue protein sequence, read N- to C-terminus: B lymphocyte-induced maturation protein 1 homolog (817 aa).

Positions 1–62 (MGQGSGDDGV…PAGVSASGAR (62 aa)) are disordered. The span at 15-61 (FSSAAAAAHSPPHSPLSVGVSSASSATSSSSTPPSSTSPAGVSASGA) shows a compositional bias: low complexity. The SET domain occupies 103–241 (MNLILKSSSK…ANTELSFWFS (139 aa)). 4 consecutive C2H2-type zinc fingers follow at residues 508–530 (YACKDCNKTFGQLSNLKVHVRTH), 536–558 (FKCEICTKEFTQLAHLQKHHLVH), 564–586 (HRCDICDKRFSSTSNLKTHLRLH), and 592–614 (YTCDVCDAKFTQYVHLRLHKRLH). The C2H2-type 5; degenerate zinc finger occupies 620–642 (YSCGTCGKKYISPSGLRTHWKTT). The disordered stretch occupies residues 709 to 817 (LLGQGPSGMQ…LPSLGLPHYP (109 aa)). Residues 779 to 794 (QGGPSSGSGQQQHPQH) show a composition bias toward low complexity.

In terms of assembly, interacts with dre-1; the interaction targets blmp-1 for proteasomal degradation. Interacts with ldb-1 and ham-3. Post-translationally, ubiquitinated by the SCF(dre-1) complex, leading to its degradation by the proteasome. As to expression, expressed in hypodermal, vulval, intestinal and distal tip cells.

Its subcellular location is the nucleus. It localises to the cytoplasm. Transcription factor which binds to enhancer elements in the promoter region of genes. Regulates the expression of the transcription factor bed-3 to control vulval development. Promotes terminal differentiation in the hypodermis and is involved in regulation of gonadal outgrowth and entry into the dauer stage. Regulates the timing of dorsalward migration of the distal tip cells of the hermaphrodite gonad by inhibiting precocious unc-5 and lin-29 expression which in turn prevents early dorsalward turning. Plays a role in male tail tip morphogenesis. This is B lymphocyte-induced maturation protein 1 homolog from Caenorhabditis elegans.